Consider the following 382-residue polypeptide: HVDHGKTTLTAAITKVMSLKGAAQFMAYDQIDNAPEERARGITIAIRHVEYQTDKRHYAHVDCPGHADYIKNMITGAAQMDGAILVVSAPDGPMPQTREHILLARQVQVPAIVVFLNKVDMMDDPELLELVELELRELLSKYGFPGDEIPIVRGTARNALESPSKDINAPEYKCILELMNAVDEYIPTPQRAVDQPFLMPIEDVFGIKGRGTVVTGRIERGKVKVGDTVEIVGMTNDAPRRTVVTGVEMFQKTLDEGIAGDNVGCLLRGIERTDVERGQVLCAPGSIKPHKKFEAQVYVLKKEEGGRHTPFFSGYRPQFYIRTTDVTGAIGLPAGMEMVMPGDNVVMTIELIVPVAIEEGLRFAIREGGRTVGAGVVTKILD.

Residues 1 to 7, 62 to 66, and 117 to 120 contribute to the GTP site; these read HVDHGKT, DCPGH, and NKVD. One can recognise a tr-type G domain in the interval 1-190; that stretch reads HVDHGKTTLT…AVDEYIPTPQ (190 aa). T7 contributes to the Mg(2+) binding site.

Belongs to the TRAFAC class translation factor GTPase superfamily. Classic translation factor GTPase family. EF-Tu/EF-1A subfamily. As to quaternary structure, monomer.

It localises to the cytoplasm. The catalysed reaction is GTP + H2O = GDP + phosphate + H(+). Its function is as follows. GTP hydrolase that promotes the GTP-dependent binding of aminoacyl-tRNA to the A-site of ribosomes during protein biosynthesis. This Chloroflexus aurantiacus protein is Elongation factor Tu.